The primary structure comprises 68 residues: FSRKTWRIFLQVYVIGGDGTMRGAVVIFEEFKRCRLRISITGIPKNLDNDIEIIDKAFGFQTAVESAQ.

Position 17 to 20 (Gly17 to Thr20) interacts with ATP. Residue Asp18 coordinates Mg(2+). The Proton acceptor role is filled by Asp48.

The protein belongs to the phosphofructokinase type A (PFKA) family. PPi-dependent PFK group II subfamily. Atypical ATP-dependent clade 'X' sub-subfamily. In terms of assembly, homotetramer. Mg(2+) serves as cofactor.

It is found in the cytoplasm. It catalyses the reaction beta-D-fructose 6-phosphate + ATP = beta-D-fructose 1,6-bisphosphate + ADP + H(+). It participates in carbohydrate degradation; glycolysis; D-glyceraldehyde 3-phosphate and glycerone phosphate from D-glucose: step 3/4. Its activity is regulated as follows. Allosterically activated by AMP. Its function is as follows. Catalyzes the phosphorylation of D-fructose 6-phosphate to fructose 1,6-bisphosphate by ATP, the first committing step of glycolysis. The sequence is that of ATP-dependent 6-phosphofructokinase (PFK) from Triticum aestivum (Wheat).